The sequence spans 276 residues: tRNA dimethylallyltransferase (276 aa).

The segment at 9–12 is interaction with substrate tRNA; that stretch reads DSLS.

The protein belongs to the IPP transferase family. As to quaternary structure, monomer. Mg(2+) serves as cofactor.

It carries out the reaction adenosine(37) in tRNA + dimethylallyl diphosphate = N(6)-dimethylallyladenosine(37) in tRNA + diphosphate. Catalyzes the transfer of a dimethylallyl group onto the adenine at position 37 in tRNAs that read codons beginning with uridine, leading to the formation of N6-(dimethylallyl)adenosine (i(6)A). The protein is tRNA dimethylallyltransferase (miaA) of Helicobacter pylori (strain Shi470).